The chain runs to 1061 residues: Carbamoyl phosphate synthase large chain (1061 aa).

Residues 1–401 (MPKRTDVHKI…ALQKAVRSLE (401 aa)) form a carboxyphosphate synthetic domain region. ATP-binding residues include Arg-129, Arg-169, Gly-175, Gly-176, Lys-208, Ile-210, Glu-215, Gly-241, Ile-242, His-243, Gln-284, and Glu-298. In terms of domain architecture, ATP-grasp 1 spans 133–327 (KDLMQELNEP…IAKLAAKIAV (195 aa)). Mg(2+) is bound by residues Gln-284, Glu-298, and Asn-300. Positions 284, 298, and 300 each coordinate Mn(2+). Residues 402–546 (IDEKDLISAK…YSSYDLENES (145 aa)) are oligomerization domain. Residues 547 to 929 (KKSDKKSVLV…ALYKAFTGAK (383 aa)) are carbamoyl phosphate synthetic domain. Residues 671-861 (DQTIKNLGLK…MAQVATRVIL (191 aa)) enclose the ATP-grasp 2 domain. The ATP site is built by Arg-707, Ala-746, Leu-748, Glu-752, Gly-777, Val-778, His-779, Ser-780, Gln-820, and Glu-832. Mg(2+) is bound by residues Gln-820, Glu-832, and Asn-834. Residues Gln-820, Glu-832, and Asn-834 each contribute to the Mn(2+) site. In terms of domain architecture, MGS-like spans 930-1061 (MELPDNGNVL…ENRSFATNSL (132 aa)). Residues 930 to 1061 (MELPDNGNVL…ENRSFATNSL (132 aa)) are allosteric domain.

The protein belongs to the CarB family. As to quaternary structure, composed of two chains; the small (or glutamine) chain promotes the hydrolysis of glutamine to ammonia, which is used by the large (or ammonia) chain to synthesize carbamoyl phosphate. Tetramer of heterodimers (alpha,beta)4. Requires Mg(2+) as cofactor. The cofactor is Mn(2+).

It carries out the reaction hydrogencarbonate + L-glutamine + 2 ATP + H2O = carbamoyl phosphate + L-glutamate + 2 ADP + phosphate + 2 H(+). The enzyme catalyses hydrogencarbonate + NH4(+) + 2 ATP = carbamoyl phosphate + 2 ADP + phosphate + 2 H(+). Its pathway is amino-acid biosynthesis; L-arginine biosynthesis; carbamoyl phosphate from bicarbonate: step 1/1. It functions in the pathway pyrimidine metabolism; UMP biosynthesis via de novo pathway; (S)-dihydroorotate from bicarbonate: step 1/3. Its function is as follows. Large subunit of the glutamine-dependent carbamoyl phosphate synthetase (CPSase). CPSase catalyzes the formation of carbamoyl phosphate from the ammonia moiety of glutamine, carbonate, and phosphate donated by ATP, constituting the first step of 2 biosynthetic pathways, one leading to arginine and/or urea and the other to pyrimidine nucleotides. The large subunit (synthetase) binds the substrates ammonia (free or transferred from glutamine from the small subunit), hydrogencarbonate and ATP and carries out an ATP-coupled ligase reaction, activating hydrogencarbonate by forming carboxy phosphate which reacts with ammonia to form carbamoyl phosphate. The chain is Carbamoyl phosphate synthase large chain from Ligilactobacillus salivarius (strain UCC118) (Lactobacillus salivarius).